We begin with the raw amino-acid sequence, 52 residues long: uncharacterized protein (52 aa).

This is an uncharacterized protein from Rickettsia conorii (strain ATCC VR-613 / Malish 7).